The primary structure comprises 461 residues: Alcaligin biosynthesis enzyme (461 aa).

Residue 9 to 15 (VAIGIGP) coordinates FAD.

It belongs to the lysine N(6)-hydroxylase/L-ornithine N(5)-oxygenase family. The cofactor is FAD.

It participates in siderophore biosynthesis; alcaligin biosynthesis. This Bordetella bronchiseptica (strain ATCC BAA-588 / NCTC 13252 / RB50) (Alcaligenes bronchisepticus) protein is Alcaligin biosynthesis enzyme (alcA).